The primary structure comprises 159 residues: UPF0201 protein MK0399 (159 aa).

It belongs to the UPF0201 family.

The chain is UPF0201 protein MK0399 from Methanopyrus kandleri (strain AV19 / DSM 6324 / JCM 9639 / NBRC 100938).